The primary structure comprises 456 residues: Serine--tRNA ligase (456 aa).

Position 252–254 (252–254 (TSE)) interacts with L-serine. ATP is bound by residues 283–285 (RKE) and valine 299. Glutamate 306 lines the L-serine pocket. 370–373 (ELVS) contributes to the ATP binding site. Threonine 404 is an L-serine binding site.

It belongs to the class-II aminoacyl-tRNA synthetase family. Type-1 seryl-tRNA synthetase subfamily. Homodimer. The tRNA molecule binds across the dimer.

It is found in the cytoplasm. The catalysed reaction is tRNA(Ser) + L-serine + ATP = L-seryl-tRNA(Ser) + AMP + diphosphate + H(+). It catalyses the reaction tRNA(Sec) + L-serine + ATP = L-seryl-tRNA(Sec) + AMP + diphosphate + H(+). The protein operates within aminoacyl-tRNA biosynthesis; selenocysteinyl-tRNA(Sec) biosynthesis; L-seryl-tRNA(Sec) from L-serine and tRNA(Sec): step 1/1. In terms of biological role, catalyzes the attachment of serine to tRNA(Ser). Is also able to aminoacylate tRNA(Sec) with serine, to form the misacylated tRNA L-seryl-tRNA(Sec), which will be further converted into selenocysteinyl-tRNA(Sec). This chain is Serine--tRNA ligase, found in Korarchaeum cryptofilum (strain OPF8).